Consider the following 584-residue polypeptide: Sulfite reductase [NADPH] hemoprotein beta-component (584 aa).

[4Fe-4S] cluster contacts are provided by Cys-447, Cys-453, Cys-492, and Cys-496. Cys-496 is a siroheme binding site.

Belongs to the nitrite and sulfite reductase 4Fe-4S domain family. In terms of assembly, alpha(8)-beta(8). The alpha component is a flavoprotein, the beta component is a hemoprotein. The cofactor is siroheme. It depends on [4Fe-4S] cluster as a cofactor.

The catalysed reaction is hydrogen sulfide + 3 NADP(+) + 3 H2O = sulfite + 3 NADPH + 4 H(+). The protein operates within sulfur metabolism; hydrogen sulfide biosynthesis; hydrogen sulfide from sulfite (NADPH route): step 1/1. In terms of biological role, component of the sulfite reductase complex that catalyzes the 6-electron reduction of sulfite to sulfide. This is one of several activities required for the biosynthesis of L-cysteine from sulfate. This chain is Sulfite reductase [NADPH] hemoprotein beta-component, found in Colwellia psychrerythraea (strain 34H / ATCC BAA-681) (Vibrio psychroerythus).